The chain runs to 207 residues: LexA repressor (207 aa).

The segment at residues 28 to 48 (VREIGEAVGLASSSTVHGHLS) is a DNA-binding region (H-T-H motif). Residues S130 and K168 each act as for autocatalytic cleavage activity in the active site.

Belongs to the peptidase S24 family. Homodimer.

It carries out the reaction Hydrolysis of Ala-|-Gly bond in repressor LexA.. Functionally, represses a number of genes involved in the response to DNA damage (SOS response), including recA and lexA. In the presence of single-stranded DNA, RecA interacts with LexA causing an autocatalytic cleavage which disrupts the DNA-binding part of LexA, leading to derepression of the SOS regulon and eventually DNA repair. The protein is LexA repressor of Staphylococcus haemolyticus (strain JCSC1435).